Reading from the N-terminus, the 137-residue chain is ATP synthase epsilon chain (137 aa).

It belongs to the ATPase epsilon chain family. In terms of assembly, F-type ATPases have 2 components, CF(1) - the catalytic core - and CF(0) - the membrane proton channel. CF(1) has five subunits: alpha(3), beta(3), gamma(1), delta(1), epsilon(1). CF(0) has three main subunits: a, b and c.

It localises to the cell membrane. Functionally, produces ATP from ADP in the presence of a proton gradient across the membrane. This chain is ATP synthase epsilon chain, found in Caldicellulosiruptor saccharolyticus (strain ATCC 43494 / DSM 8903 / Tp8T 6331).